A 293-amino-acid polypeptide reads, in one-letter code: DDRGK domain-containing protein 1 (293 aa).

Residues 1 to 6 lie on the Lumenal side of the membrane; the sequence is MWGPLI. A helical transmembrane segment spans residues 7–27; it reads YALLGLAIVAAAFLFVRRSQA. Over 28–293 the chain is Cytoplasmic; that stretch reads KEVVPVADDD…PADVDETTTA (266 aa). 2 disordered regions span residues 30–151 and 273–293; these read VVPV…RQKE and TDVE…TTTA. Composition is skewed to basic and acidic residues over residues 90-126 and 133-151; these read KLQE…KERE and ERQR…RQKE.

The protein belongs to the DDRGK1 family.

The protein localises to the endoplasmic reticulum membrane. In terms of biological role, substrate adapter for ufmylation, the covalent attachment of the ubiquitin-like modifier UFM1 to substrate proteins. The polypeptide is DDRGK domain-containing protein 1 (Monosiga brevicollis (Choanoflagellate)).